A 112-amino-acid chain; its full sequence is Putative pterin-4-alpha-carbinolamine dehydratase (112 aa).

It belongs to the pterin-4-alpha-carbinolamine dehydratase family.

The enzyme catalyses (4aS,6R)-4a-hydroxy-L-erythro-5,6,7,8-tetrahydrobiopterin = (6R)-L-erythro-6,7-dihydrobiopterin + H2O. This Shewanella sp. (strain MR-4) protein is Putative pterin-4-alpha-carbinolamine dehydratase.